A 360-amino-acid polypeptide reads, in one-letter code: Probable dual-specificity RNA methyltransferase RlmN (360 aa).

The Proton acceptor role is filled by Glu-97. Residues 103-330 form the Radical SAM core domain; sequence DGDRLTFCIS…TAVRRSRGLD (228 aa). Cysteines 110 and 335 form a disulfide. The [4Fe-4S] cluster site is built by Cys-117, Cys-121, and Cys-124. S-adenosyl-L-methionine is bound by residues 165-166, Ser-197, 220-222, and His-292; these read GE and SIH. Cys-335 serves as the catalytic S-methylcysteine intermediate.

Belongs to the radical SAM superfamily. RlmN family. It depends on [4Fe-4S] cluster as a cofactor.

It localises to the cytoplasm. The enzyme catalyses adenosine(2503) in 23S rRNA + 2 reduced [2Fe-2S]-[ferredoxin] + 2 S-adenosyl-L-methionine = 2-methyladenosine(2503) in 23S rRNA + 5'-deoxyadenosine + L-methionine + 2 oxidized [2Fe-2S]-[ferredoxin] + S-adenosyl-L-homocysteine. It catalyses the reaction adenosine(37) in tRNA + 2 reduced [2Fe-2S]-[ferredoxin] + 2 S-adenosyl-L-methionine = 2-methyladenosine(37) in tRNA + 5'-deoxyadenosine + L-methionine + 2 oxidized [2Fe-2S]-[ferredoxin] + S-adenosyl-L-homocysteine. Specifically methylates position 2 of adenine 2503 in 23S rRNA and position 2 of adenine 37 in tRNAs. The protein is Probable dual-specificity RNA methyltransferase RlmN of Gemmatimonas aurantiaca (strain DSM 14586 / JCM 11422 / NBRC 100505 / T-27).